The following is an 806-amino-acid chain: Phenylalanine--tRNA ligase beta subunit (806 aa).

The tRNA-binding domain maps to 40–155; that stretch reads NKGVKGVVVG…SDAEVGADAL (116 aa). The B5 domain occupies 409-484; sequence VQERTVSVTA…RLYGYDHIPV (76 aa). Positions 462, 468, 471, and 472 each coordinate Mg(2+). The 94-residue stretch at 712-805 folds into the FDX-ACB domain; that stretch reads PRFPSMTRDM…VEEKFGAELR (94 aa).

This sequence belongs to the phenylalanyl-tRNA synthetase beta subunit family. Type 1 subfamily. In terms of assembly, tetramer of two alpha and two beta subunits. Mg(2+) is required as a cofactor.

Its subcellular location is the cytoplasm. The enzyme catalyses tRNA(Phe) + L-phenylalanine + ATP = L-phenylalanyl-tRNA(Phe) + AMP + diphosphate + H(+). The protein is Phenylalanine--tRNA ligase beta subunit of Bacillus thuringiensis subsp. konkukian (strain 97-27).